Consider the following 116-residue polypeptide: Vesicle-associated membrane protein 2 (116 aa).

The disordered stretch occupies residues 1-28 (MSATAATVPPAAPAGEGGPPAPPPNLTS). Serine 2 carries the post-translational modification N-acetylserine. The Cytoplasmic portion of the chain corresponds to 2-94 (SATAATVPPA…KRKYWWKNLK (93 aa)). Positions 31–91 (RLQQTQAQVD…AKLKRKYWWK (61 aa)) constitute a v-SNARE coiled-coil homology domain. The tract at residues 92-116 (NLKMMIILGVICAIILIIIIVYFST) is required for interaction with SEPT8. Residues 95–114 (MMIILGVICAIILIIIIVYF) traverse the membrane as a helical; Anchor for type IV membrane protein segment. The Vesicular portion of the chain corresponds to 115-116 (ST).

It belongs to the synaptobrevin family. As to quaternary structure, part of the SNARE core complex containing SNAP25, VAMP2 and STX1A; this complex constitutes the basic catalytic machinery of the complex neurotransmitter release apparatus. Recruited to the SNARE complex following binding of the SNARE complex component STX1A to STXBP1. This complex binds to CPLX1. Interacts with VAPA and VAPB. Interacts (via N-terminus) with KCNB1 (via N-terminus and C-terminus); stimulates the channel inactivation rate of KCNB1. Interacts with POPDC1 and STX4. Interacts with WDFY2, PRKCZ and PRKCI. Forms a complex with WDFY2 and PRKCZ. Interacts with SEPT8; the interaction inhibits interaction of VAMP2 with SYP. Interacts with SYP; the interaction is inhibited by interaction with SEPT8. Interacts with PICALM. Interacts with alpha-synuclein/SNCA. Interacts with STX3 isoform 3B. Post-translationally, phosphorylated by PRKCZ in vitro and this phosphorylation is increased in the presence of WDFY2. (Microbial infection) Targeted and hydrolyzed by C.botulinum neurotoxin type B (BoNT/B, botB); 20 hours after treatment of spinal cord cells almost all the protein has been digested. BoNT/B hydrolyzes the 76-Gln-|-Phe-77 bond and inhibits neurotransmitter release. In terms of processing, (Microbial infection) Targeted and hydrolyzed by C.tetani toxin (tetX); 20 hours after treatment of spinal cord cells almost all the protein has been digested. Tetanus toxin hydrolyzes the 76-Gln-|-Phe-77 bond and inhibits neurotransmitter release. Expressed in the outer plexiform layer of the retina (at protein level).

The protein localises to the cytoplasmic vesicle. The protein resides in the secretory vesicle. It localises to the synaptic vesicle membrane. Its subcellular location is the cell membrane. Functionally, involved in the targeting and/or fusion of transport vesicles to their target membrane. Major SNARE protein of synaptic vesicles which mediates fusion of synaptic vesicles to release neurotransmitters. Essential for fast vesicular exocytosis and activity-dependent neurotransmitter release as well as fast endocytosis that mediates rapid reuse of synaptic vesicles. Modulates the gating characteristics of the delayed rectifier voltage-dependent potassium channel KCNB1. This Mus musculus (Mouse) protein is Vesicle-associated membrane protein 2 (Vamp2).